The primary structure comprises 74 residues: Exodeoxyribonuclease 7 small subunit (74 aa).

This sequence belongs to the XseB family. In terms of assembly, heterooligomer composed of large and small subunits.

It localises to the cytoplasm. It catalyses the reaction Exonucleolytic cleavage in either 5'- to 3'- or 3'- to 5'-direction to yield nucleoside 5'-phosphates.. Functionally, bidirectionally degrades single-stranded DNA into large acid-insoluble oligonucleotides, which are then degraded further into small acid-soluble oligonucleotides. In Ruthia magnifica subsp. Calyptogena magnifica, this protein is Exodeoxyribonuclease 7 small subunit.